Consider the following 180-residue polypeptide: ATP-dependent protease subunit HslV (180 aa).

Thr5 is an active-site residue. Na(+)-binding residues include Gly161, Cys164, and Thr167.

This sequence belongs to the peptidase T1B family. HslV subfamily. A double ring-shaped homohexamer of HslV is capped on each side by a ring-shaped HslU homohexamer. The assembly of the HslU/HslV complex is dependent on binding of ATP.

It is found in the cytoplasm. The enzyme catalyses ATP-dependent cleavage of peptide bonds with broad specificity.. With respect to regulation, allosterically activated by HslU binding. In terms of biological role, protease subunit of a proteasome-like degradation complex believed to be a general protein degrading machinery. This Campylobacter jejuni subsp. jejuni serotype O:6 (strain 81116 / NCTC 11828) protein is ATP-dependent protease subunit HslV.